A 760-amino-acid polypeptide reads, in one-letter code: Striatin-4 (760 aa).

The segment at 1–65 (MMEERAAAAV…PTAGPEPLSL (65 aa)) is disordered. Low complexity predominate over residues 7-35 (AAAVASAASSCRPLGSGTAPNPTAAAPAS). The segment covering 43–54 (PVGKGGGGGGSP) has biased composition (gly residues). The residue at position 53 (Ser53) is a Phosphoserine. Residues 69–136 (LHFIQHEWAR…QERAKYHKLK (68 aa)) are a coiled coil. Residues 71 to 79 (FIQHEWARF) are caveolin-binding. Residues 165-182 (ENSPLVWKEGRQLLRQYL) are calmodulin-binding. Ser206, Ser223, and Ser276 each carry phosphoserine. Disordered regions lie at residues 210–233 (NGAG…SGGE) and 272–346 (EDED…PHEL). Acidic residues-rich tracts occupy residues 272–283 (EDEDSDEDDELD) and 302–317 (EMED…DAIN). A compositionally biased stretch (basic and acidic residues) spans 332-346 (PDPRRCTSEGNPHEL). WD repeat units follow at residues 443–482 (SHYD…TAKK), 496–535 (AHRG…MDPY), 549–588 (GHGD…PSCL), 595–635 (GEHG…ALLT), 642–681 (SGPA…SVHS), 684–723 (AHLD…CVQE), and 730–759 (KHEE…AKVF).

Belongs to the WD repeat striatin family. In terms of assembly, part of the core of STRIPAK complexes composed of PP2A catalytic and scaffolding subunits, the striatins (PP2A regulatory subunits), the striatin-associated proteins MOB4, STRIP1 and STRIP2, PDCD10 and members of the STE20 kinases, such as STK24 and STK26. Interacts with CTTNBP2NL. In terms of tissue distribution, mainly expressed in brain but is also expressed at low levels in the kidney.

The protein localises to the cytoplasm. It localises to the membrane. It is found in the cell projection. The protein resides in the dendritic spine. Calmodulin-binding scaffolding protein which is the center of the striatin-interacting phosphatase and kinase (STRIPAK) complexes. STRIPAK complexes have critical roles in protein (de)phosphorylation and are regulators of multiple signaling pathways including Hippo, MAPK, nuclear receptor and cytoskeleton remodeling. Different types of STRIPAK complexes are involved in a variety of biological processes such as cell growth, differentiation, apoptosis, metabolism and immune regulation. Key regulator of the expanded Hippo signaling pathway by interacting and allowing the inhibition of MAP4K kinases by the STRIPAK complex. The protein is Striatin-4 (Strn4) of Mus musculus (Mouse).